The sequence spans 158 residues: Low molecular weight phosphotyrosine protein phosphatase (158 aa).

N-acetylalanine is present on Ala-2. The active-site Nucleophile is the Cys-13. Arg-19 is a catalytic residue. The active-site Proton donor is Asp-130. 2 positions are modified to phosphotyrosine: Tyr-132 and Tyr-133.

It belongs to the low molecular weight phosphotyrosine protein phosphatase family. Interacts with EPHA2; dephosphorylates EPHA2. Interacts with EPHB1. As to quaternary structure, interacts with the SH3 domain of SPTAN1. There is no interaction observed for isoform 2. Phosphorylated by LCK. Phosphorylation at Tyr-132 increases its phosphatase activity.

The protein localises to the cytoplasm. The catalysed reaction is O-phospho-L-tyrosyl-[protein] + H2O = L-tyrosyl-[protein] + phosphate. It catalyses the reaction a phosphate monoester + H2O = an alcohol + phosphate. Inhibited by sulfhydryl reagents. In terms of biological role, acts on tyrosine phosphorylated proteins, low-MW aryl phosphates and natural and synthetic acyl phosphates with differences in substrate specificity between isoform 1 and isoform 2. This chain is Low molecular weight phosphotyrosine protein phosphatase, found in Rattus norvegicus (Rat).